The following is a 587-amino-acid chain: Complement component C8 beta chain (587 aa).

The N-terminal stretch at 1 to 31 (MNHKLKPTVGLGYCLLCAALCLLLLRDVAIA) is a signal peptide. A propeptide spanning residues 32–44 (GSGEEPSGVREAR) is cleaved from the precursor. The TSP type-1 1 domain maps to 56-111 (DCVQSEWSSWTRCDVCRKKRYRYAKLVQPSQFGGEPCHVQGKEVEPCSPPSRYDCT). 5 cysteine pairs are disulfide-bonded: cysteine 57/cysteine 92, cysteine 68/cysteine 102, cysteine 71/cysteine 110, cysteine 118/cysteine 129, and cysteine 123/cysteine 142. Residues tryptophan 62 and tryptophan 65 are each glycosylated (C-linked (Man) tryptophan). The LDL-receptor class A domain occupies 117–159 (LCEGFLCTYTGRCVPIDLRCNGDDDCGDWSAEKGSPKVPKACK). Ca(2+) contacts are provided by leucine 134, asparagine 137, aspartate 139, aspartate 141, and glutamate 148. Residues 154-500 (VPKACKQEAQ…EYLEESSSCR (347 aa)) form the MACPF domain. A disulfide bridge links cysteine 158 with cysteine 196. 4 beta stranded membrane passes run 248–255 (TTVSIGFA), 258–265 (GVAEFGFN), 375–382 (EQIVLKVG), and 388–395 (VYVTVGLE). 5 cysteine pairs are disulfide-bonded: cysteine 374-cysteine 399, cysteine 499-cysteine 546, cysteine 501-cysteine 517, cysteine 504-cysteine 519, and cysteine 521-cysteine 530. The EGF-like domain maps to 501–531 (CAPCRNNGLAVLKGTRCECVCPSGYSGLGCE). Residues 541–587 (DGSWSCWGSWSPCRGRSKTRSRQCNNPAPSSGGIACRGLQMETTDCF) form the TSP type-1 2 domain. Residues tryptophan 547 and tryptophan 550 are each glycosylated (C-linked (Man) tryptophan). Cysteine 553 and cysteine 586 are joined by a disulfide.

The protein belongs to the complement C6/C7/C8/C9 family. In terms of assembly, heterotrimer of 3 chains: alpha (C8A), beta (C8B) and gamma (C8G); the alpha and gamma chains are disulfide bonded. Component of the membrane attack complex (MAC), composed of complement C5b, C6, C7, C8A, C8B, C8G and multiple copies of the pore-forming subunit C9.

The protein resides in the secreted. The protein localises to the target cell membrane. Functionally, component of the membrane attack complex (MAC), a multiprotein complex activated by the complement cascade, which inserts into a target cell membrane and forms a pore, leading to target cell membrane rupture and cell lysis. The MAC is initiated by proteolytic cleavage of C5 into complement C5b in response to the classical, alternative, lectin and GZMK complement pathways. The complement pathways consist in a cascade of proteins that leads to phagocytosis and breakdown of pathogens and signaling that strengthens the adaptive immune system. C8B, together with C8A and C8G, inserts into the target membrane, but does not form pores by itself. During MAC assembly, associates with C5b, C6 and C7 to form the C5b8 intermediate complex that inserts into the target membrane and traverses the bilayer increasing membrane rigidity. The sequence is that of Complement component C8 beta chain (c8b) from Oncorhynchus mykiss (Rainbow trout).